The chain runs to 189 residues: Elongation factor P (189 aa).

Lysine 34 bears the N6-(3,6-diaminohexanoyl)-5-hydroxylysine mark.

It belongs to the elongation factor P family. Post-translationally, may be beta-lysylated on the epsilon-amino group of Lys-34 by the combined action of EpmA and EpmB, and then hydroxylated on the C5 position of the same residue by EpmC (if this protein is present). Lysylation is critical for the stimulatory effect of EF-P on peptide-bond formation. The lysylation moiety may extend toward the peptidyltransferase center and stabilize the terminal 3-CCA end of the tRNA. Hydroxylation of the C5 position on Lys-34 may allow additional potential stabilizing hydrogen-bond interactions with the P-tRNA.

It is found in the cytoplasm. It functions in the pathway protein biosynthesis; polypeptide chain elongation. Involved in peptide bond synthesis. Alleviates ribosome stalling that occurs when 3 or more consecutive Pro residues or the sequence PPG is present in a protein, possibly by augmenting the peptidyl transferase activity of the ribosome. Modification of Lys-34 is required for alleviation. The polypeptide is Elongation factor P (Buchnera aphidicola subsp. Acyrthosiphon pisum (strain APS) (Acyrthosiphon pisum symbiotic bacterium)).